Reading from the N-terminus, the 130-residue chain is Small ribosomal subunit protein uS9 (130 aa).

Residues 98 to 130 (LKRAGLLTRDPRMKERKKPGLKKARRSPQFSKR) form a disordered region. A compositionally biased stretch (basic residues) spans 111 to 130 (KERKKPGLKKARRSPQFSKR).

This sequence belongs to the universal ribosomal protein uS9 family.

The sequence is that of Small ribosomal subunit protein uS9 from Staphylococcus haemolyticus (strain JCSC1435).